The sequence spans 61 residues: Large ribosomal subunit protein eL37 (61 aa).

Residues cysteine 19, cysteine 22, cysteine 34, and cysteine 37 each coordinate Zn(2+). The C4-type zinc-finger motif lies at 19–37; that stretch reads CRRCGRNSFNVRKGYCAAC.

This sequence belongs to the eukaryotic ribosomal protein eL37 family. Requires Zn(2+) as cofactor.

Binds to the 23S rRNA. This chain is Large ribosomal subunit protein eL37 (rpl37e), found in Sulfurisphaera tokodaii (strain DSM 16993 / JCM 10545 / NBRC 100140 / 7) (Sulfolobus tokodaii).